The following is a 423-amino-acid chain: Gamma-glutamyl phosphate reductase (423 aa).

Belongs to the gamma-glutamyl phosphate reductase family.

It localises to the cytoplasm. The enzyme catalyses L-glutamate 5-semialdehyde + phosphate + NADP(+) = L-glutamyl 5-phosphate + NADPH + H(+). It participates in amino-acid biosynthesis; L-proline biosynthesis; L-glutamate 5-semialdehyde from L-glutamate: step 2/2. In terms of biological role, catalyzes the NADPH-dependent reduction of L-glutamate 5-phosphate into L-glutamate 5-semialdehyde and phosphate. The product spontaneously undergoes cyclization to form 1-pyrroline-5-carboxylate. The chain is Gamma-glutamyl phosphate reductase from Burkholderia orbicola (strain AU 1054).